The following is a 298-amino-acid chain: Probable endonuclease 4 (298 aa).

The Zn(2+) site is built by histidine 69, histidine 111, glutamate 146, aspartate 180, histidine 183, histidine 215, aspartate 228, histidine 230, and glutamate 260.

Belongs to the AP endonuclease 2 family. Zn(2+) is required as a cofactor.

It catalyses the reaction Endonucleolytic cleavage to 5'-phosphooligonucleotide end-products.. Functionally, endonuclease IV plays a role in DNA repair. It cleaves phosphodiester bonds at apurinic or apyrimidinic (AP) sites, generating a 3'-hydroxyl group and a 5'-terminal sugar phosphate. The polypeptide is Probable endonuclease 4 (Bacillus cereus (strain B4264)).